A 305-amino-acid polypeptide reads, in one-letter code: Oxygen-dependent coproporphyrinogen-III oxidase (305 aa).

Ser-93 is a binding site for substrate. A divalent metal cation-binding residues include His-97 and His-107. His-107 functions as the Proton donor in the catalytic mechanism. 109-111 (NVR) serves as a coordination point for substrate. Residues His-146 and His-176 each contribute to the a divalent metal cation site. The important for dimerization stretch occupies residues 241-276 (YVEFNLVYDRGTLFGLQSGGRTESILMSLPPQVRWG). A substrate-binding site is contributed by 259–261 (GGR).

It belongs to the aerobic coproporphyrinogen-III oxidase family. In terms of assembly, homodimer. A divalent metal cation serves as cofactor.

The protein resides in the cytoplasm. It catalyses the reaction coproporphyrinogen III + O2 + 2 H(+) = protoporphyrinogen IX + 2 CO2 + 2 H2O. The protein operates within porphyrin-containing compound metabolism; protoporphyrin-IX biosynthesis; protoporphyrinogen-IX from coproporphyrinogen-III (O2 route): step 1/1. In terms of biological role, involved in the heme biosynthesis. Catalyzes the aerobic oxidative decarboxylation of propionate groups of rings A and B of coproporphyrinogen-III to yield the vinyl groups in protoporphyrinogen-IX. This chain is Oxygen-dependent coproporphyrinogen-III oxidase, found in Pseudomonas fluorescens (strain ATCC BAA-477 / NRRL B-23932 / Pf-5).